The following is a 487-amino-acid chain: Protein nucleotidyltransferase YdiU (487 aa).

Residues Gly-90, Gly-92, Arg-93, Lys-113, Asp-125, Gly-126, Arg-176, and Arg-183 each contribute to the ATP site. Catalysis depends on Asp-252, which acts as the Proton acceptor. The Mg(2+) site is built by Asn-253 and Asp-262. Asp-262 contributes to the ATP binding site.

The protein belongs to the SELO family. It depends on Mg(2+) as a cofactor. Mn(2+) is required as a cofactor.

It catalyses the reaction L-seryl-[protein] + ATP = 3-O-(5'-adenylyl)-L-seryl-[protein] + diphosphate. It carries out the reaction L-threonyl-[protein] + ATP = 3-O-(5'-adenylyl)-L-threonyl-[protein] + diphosphate. The enzyme catalyses L-tyrosyl-[protein] + ATP = O-(5'-adenylyl)-L-tyrosyl-[protein] + diphosphate. The catalysed reaction is L-histidyl-[protein] + UTP = N(tele)-(5'-uridylyl)-L-histidyl-[protein] + diphosphate. It catalyses the reaction L-seryl-[protein] + UTP = O-(5'-uridylyl)-L-seryl-[protein] + diphosphate. It carries out the reaction L-tyrosyl-[protein] + UTP = O-(5'-uridylyl)-L-tyrosyl-[protein] + diphosphate. Its function is as follows. Nucleotidyltransferase involved in the post-translational modification of proteins. It can catalyze the addition of adenosine monophosphate (AMP) or uridine monophosphate (UMP) to a protein, resulting in modifications known as AMPylation and UMPylation. The sequence is that of Protein nucleotidyltransferase YdiU from Pseudomonas fluorescens (strain Pf0-1).